The sequence spans 184 residues: Adenine phosphoribosyltransferase (184 aa).

Belongs to the purine/pyrimidine phosphoribosyltransferase family. In terms of assembly, homodimer.

Its subcellular location is the cytoplasm. It carries out the reaction AMP + diphosphate = 5-phospho-alpha-D-ribose 1-diphosphate + adenine. The protein operates within purine metabolism; AMP biosynthesis via salvage pathway; AMP from adenine: step 1/1. Functionally, catalyzes a salvage reaction resulting in the formation of AMP, that is energically less costly than de novo synthesis. The polypeptide is Adenine phosphoribosyltransferase (Corynebacterium diphtheriae (strain ATCC 700971 / NCTC 13129 / Biotype gravis)).